A 187-amino-acid chain; its full sequence is UPF0301 protein WIGBR1650 (187 aa).

Belongs to the UPF0301 (AlgH) family.

This Wigglesworthia glossinidia brevipalpis protein is UPF0301 protein WIGBR1650.